The primary structure comprises 401 residues: Na(+)/H(+) antiporter NhaA 2 (401 aa).

A run of 11 helical transmembrane segments spans residues 13–33, 59–79, 94–114, 125–145, 154–174, 178–198, 209–229, 260–280, 292–312, 332–352, and 363–383; these read AAGG…ANSP, LLLW…GLEV, ITLP…IYVW, GWAI…TIFG, LFLL…IALF, DLST…FLLN, VLIG…ATLA, WVGF…SLFG, LGIA…VCWI, GVSL…SLAF, and VKAG…VLLA.

Belongs to the NhaA Na(+)/H(+) (TC 2.A.33) antiporter family.

Its subcellular location is the cell inner membrane. The enzyme catalyses Na(+)(in) + 2 H(+)(out) = Na(+)(out) + 2 H(+)(in). In terms of biological role, na(+)/H(+) antiporter that extrudes sodium in exchange for external protons. This is Na(+)/H(+) antiporter NhaA 2 from Pseudoalteromonas atlantica (strain T6c / ATCC BAA-1087).